We begin with the raw amino-acid sequence, 217 residues long: Thiamine-phosphate synthase (217 aa).

4-amino-2-methyl-5-(diphosphooxymethyl)pyrimidine is bound by residues 44-48 (QYREK) and Asn-76. Mg(2+)-binding residues include Asp-77 and Asp-96. Ser-115 contacts 4-amino-2-methyl-5-(diphosphooxymethyl)pyrimidine. Position 141 to 143 (141 to 143 (TKT)) interacts with 2-[(2R,5Z)-2-carboxy-4-methylthiazol-5(2H)-ylidene]ethyl phosphate. 4-amino-2-methyl-5-(diphosphooxymethyl)pyrimidine is bound at residue Lys-144. 2-[(2R,5Z)-2-carboxy-4-methylthiazol-5(2H)-ylidene]ethyl phosphate is bound by residues Gly-172 and 192–193 (VS).

This sequence belongs to the thiamine-phosphate synthase family. Mg(2+) serves as cofactor.

The enzyme catalyses 2-[(2R,5Z)-2-carboxy-4-methylthiazol-5(2H)-ylidene]ethyl phosphate + 4-amino-2-methyl-5-(diphosphooxymethyl)pyrimidine + 2 H(+) = thiamine phosphate + CO2 + diphosphate. It carries out the reaction 2-(2-carboxy-4-methylthiazol-5-yl)ethyl phosphate + 4-amino-2-methyl-5-(diphosphooxymethyl)pyrimidine + 2 H(+) = thiamine phosphate + CO2 + diphosphate. It catalyses the reaction 4-methyl-5-(2-phosphooxyethyl)-thiazole + 4-amino-2-methyl-5-(diphosphooxymethyl)pyrimidine + H(+) = thiamine phosphate + diphosphate. It participates in cofactor biosynthesis; thiamine diphosphate biosynthesis; thiamine phosphate from 4-amino-2-methyl-5-diphosphomethylpyrimidine and 4-methyl-5-(2-phosphoethyl)-thiazole: step 1/1. Its function is as follows. Condenses 4-methyl-5-(beta-hydroxyethyl)thiazole monophosphate (THZ-P) and 2-methyl-4-amino-5-hydroxymethyl pyrimidine pyrophosphate (HMP-PP) to form thiamine monophosphate (TMP). This chain is Thiamine-phosphate synthase, found in Lawsonia intracellularis (strain PHE/MN1-00).